The sequence spans 620 residues: Chaperone protein HscA homolog (620 aa).

Belongs to the heat shock protein 70 family.

Its function is as follows. Chaperone involved in the maturation of iron-sulfur cluster-containing proteins. Has a low intrinsic ATPase activity which is markedly stimulated by HscB. This is Chaperone protein HscA homolog from Pseudomonas savastanoi pv. phaseolicola (strain 1448A / Race 6) (Pseudomonas syringae pv. phaseolicola (strain 1448A / Race 6)).